We begin with the raw amino-acid sequence, 139 residues long: Ribulose bisphosphate carboxylase small subunit (139 aa).

It belongs to the RuBisCO small chain family. Heterohexadecamer of 8 large and 8 small subunits.

It localises to the plastid. Its subcellular location is the chloroplast. In terms of biological role, ruBisCO catalyzes two reactions: the carboxylation of D-ribulose 1,5-bisphosphate, the primary event in carbon dioxide fixation, as well as the oxidative fragmentation of the pentose substrate in the photorespiration process. Both reactions occur simultaneously and in competition at the same active site. Although the small subunit is not catalytic it is essential for maximal activity. The chain is Ribulose bisphosphate carboxylase small subunit from Chrysotila carterae (Marine alga).